Consider the following 468-residue polypeptide: Chromosomal replication initiator protein DnaA (468 aa).

Residues 1-84 (MSSSLWLQCL…RFEVGSRPVA (84 aa)) are domain I, interacts with DnaA modulators. Residues 81 to 104 (RPVAAPKPAPTRTPADVAAESSAP) are disordered. The domain II stretch occupies residues 84–131 (AAPKPAPTRTPADVAAESSAPAQLQARKPVHKTWDDDAQAIADINHRS). The segment at 132-348 (NVNPKHKFNN…GALNRVIANA (217 aa)) is domain III, AAA+ region. ATP-binding residues include Gly-176, Gly-178, Lys-179, and Thr-180. Residues 349–468 (NFTGRPITID…YSNLIRTLSS (120 aa)) form a domain IV, binds dsDNA region.

Belongs to the DnaA family. Oligomerizes as a right-handed, spiral filament on DNA at oriC.

It localises to the cytoplasm. Functionally, plays an essential role in the initiation and regulation of chromosomal replication. ATP-DnaA binds to the origin of replication (oriC) to initiate formation of the DNA replication initiation complex once per cell cycle. Binds the DnaA box (a 9 base pair repeat at the origin) and separates the double-stranded (ds)DNA. Forms a right-handed helical filament on oriC DNA; dsDNA binds to the exterior of the filament while single-stranded (ss)DNA is stabiized in the filament's interior. The ATP-DnaA-oriC complex binds and stabilizes one strand of the AT-rich DNA unwinding element (DUE), permitting loading of DNA polymerase. After initiation quickly degrades to an ADP-DnaA complex that is not apt for DNA replication. Binds acidic phospholipids. The sequence is that of Chromosomal replication initiator protein DnaA from Vibrio campbellii (strain ATCC BAA-1116).